The sequence spans 69 residues: Beta-defensin 1 (69 aa).

The signal sequence occupies residues 1–21; sequence MKTHYFLLVMLFFLFSQMELG. The propeptide occupies 22–32; it reads AGILTSLGRRT. 3 disulfides stabilise this stretch: cysteine 37–cysteine 66, cysteine 44–cysteine 59, and cysteine 49–cysteine 67.

The protein belongs to the beta-defensin family. In terms of assembly, monomer. Homodimer. As to expression, highly expressed in kidney.

The protein resides in the secreted. It localises to the membrane. Functionally, has bactericidal activity. May act as a ligand for C-C chemokine receptor CCR6. Positively regulates the sperm motility and bactericidal activity in a CCR6-dependent manner. Binds to CCR6 and triggers Ca2+ mobilization in the sperm which is important for its motility. This chain is Beta-defensin 1 (Defb1), found in Rattus norvegicus (Rat).